Consider the following 399-residue polypeptide: Elongation factor Tu (399 aa).

Residues 10 to 209 (KPHVNIGTIG…AVDEYIPEPT (200 aa)) form the tr-type G domain. A G1 region spans residues 19-26 (GHVDHGKT). GTP is bound at residue 19–26 (GHVDHGKT). A Mg(2+)-binding site is contributed by Thr26. A G2 region spans residues 60-64 (GITIA). Residues 81 to 84 (DCPG) are G3. GTP contacts are provided by residues 81-85 (DCPGH) and 136-139 (NKED). The G4 stretch occupies residues 136–139 (NKED). Residues 174–176 (SAK) are G5.

The protein belongs to the TRAFAC class translation factor GTPase superfamily. Classic translation factor GTPase family. EF-Tu/EF-1A subfamily. Monomer.

Its subcellular location is the cytoplasm. The catalysed reaction is GTP + H2O = GDP + phosphate + H(+). In terms of biological role, GTP hydrolase that promotes the GTP-dependent binding of aminoacyl-tRNA to the A-site of ribosomes during protein biosynthesis. This is Elongation factor Tu from Sulfurimonas denitrificans (strain ATCC 33889 / DSM 1251) (Thiomicrospira denitrificans (strain ATCC 33889 / DSM 1251)).